Consider the following 2470-residue polypeptide: MSTTSVVQQFVNGLKSRNRNVQNKATQDLLFYVKTELREMSQEELAQFFDEFDHHIFTMVNATDINEKKGGALAMKCLINCEGSLTARKGISPYLNRLRDLLLINDVSVMEIAARSLVKLANMPTSKGADSFDFDIKKAFEVLRGERQEYRRHSAVFILRELAIALPTYFYQHILTFFEVIFNAIFDPKPAIRESAGEALRAALIVTAQRESTKQSSEPQWYRICYDEANGSFNADLGSSKDQKGVTRDDRIHGGLVVFNELFRCANATWERRYTSLKTLFPKTQHNKFLEASSSSSMGSQLNTLVPRLKVPFIDKLGSTQTHLGEGEHHKGVAKFASHNVLESAYAQEILQEHYTSICDNVLEQRTSKSPYVQQALLQILPRLAAFNRAVFVEKYLQTCVSHLMQILRGKEKDRTVAYITIGYMAVAVQSAIEVHLSSIMTSVKVALPSKDLTSKRKVPVDPAVFACITLLAHAVKSEIADDVKDILEQMFYTGLSPALTVCLRELSENVPQLKSAITEGLIGILSQVLMNKAAILPYTALPTIAIDGSLMQNGDGATTVLALKTLGTFNFEEQNMLDFVQRCADYFIVHEQQEIRLEAVQTCTRLLKLAVQSSESMENSKTLSDTVSHVIERLLMVAITDMDCNVRIRILRSLDETFDGKLAQPESLNSLFITLHDEIFEIRELAMVTIGRLSSINPAYVMPKLRTTMIELITDLKYSGMSRNKEQSAKMLDHLVISTPRLISSYMNPILKALVPKLHEPESNPGVILNVLRTIGDLAEVNGGSDEMELWADDLLSILLEMLGDAGSPDKRGVALWTLGQLISATGRVVTPYHKYPVLIDILINFLKTEQRRSIRRETIRVLGLLGAMDPYKHKMNKGLIDSQKDNVLIAYSDGKVDESQDISTAELLVNMGNALDEYYPAVAIAALMRILRDPTLSTRHTSVVQAVTFIFQSLGIKCVPYLAQVLPNLLDNVRTADNNLREFLFQQLAILVAFVKLHIISYMGDIFKLIKEFWTINTPLQNTLINLIEQIAVALGCEFRDYLAELIPQILRVLQHDNSKDRMVTRRLLQALQKFGSTLGYYLPLILPPIVKLFDSPYVPQQVSMVALETINNLACQLDFTDFSSRIIHPLVRVLDAEPELRDQAMTTLRSLAKQLGKKYLVFVPMVQRTLNKHRIVDPEYEELLSKIKSCSTLADSYGAGESELRPSRFKNNEPFVTDRNSNNKNLQVTTNELRTAWQVTRRVSKDDWVEWLKRLSIGLLKESPSHALRACRSLAQEYDTLLRDLFNAAFISCWTELSPDLKNELTQSLIQALQVTDMPEITQTILNLAEFMEHCDRDPIPIETKLLGTRAMACRAYAKALRYKEEEFLLREDSQVFESLILINNKLQQREAAEGLLTRYRNAANELNVQGRWYEKLHNWDEALEHYERNLKTDSSDLEARLGHMRCLEALGDWSELSNVTKHEWENFGTEAKSRAGPLAAVAAWGLQDWEAMREYVRCIPEDTQDGSYYRAVLAVHHDDFETAQRLIDETRDLLDTELTSMAGESYERAYGAMVCVQMLAELEEVIQYKLIPERREPLKTMWWKRLQGGQRLVEDWRRIIQVHSLVVKPHEDIHTWLKYASLCRKSGSLHLSHKTLVMLLGTDPKLNPNQPLPCNQPQVTYAYTKYMAANNQLQEAYEQLTHFVSTYSQELSCLPPEALKQQDQRLMARCYLRMATWQNKLQDSIRPDAIQGALECFEKATSYDPNWYKAWHLWAYMNFKVVQAQKSALDKQQPPGASMGMTMGSGLDSDLMIIQRYAVPAVQGFFRSISLIKGNSLQDTLRLLTLWFDYGNHAEVYEALLSGMKLIEINTWLQVIPQLIARIDTHRQLVGQLIHQLLMDIGKNHPQALVYPLTVASKSASLARRNAAFKILDSMRKHSPTLVEQAVMCSEELIRVAILWHEQWHEGLEEASRLYFGDRNVKGMFEILEPLHAMLERGPQTLKETSFSQAYGRELTEAYEWSQRYKTSAVVMDLDRAWDIYYHVFQKISRQLPQLTSLELPYVSPKLMTCKDLELAVPGSYNPGQELIRISIIKTNLQVITSKQRPRKLCIRGSNGKDYMYLLKGHEDLRQDERVMQLFSLVNTLLLDDPDTFRRNLAIQRYAVIPLSTNSGLIGWVPHCDTLHTLIRDYRDKKKVPLNQEHRTMLNFAPDYDHLTLMQKVEVFEHALGQTQGDDLAKLLWLKSPSSELWFERRNNYTRSLAVMSMVGYILGLGDRHPSNLMLDRMSGKILHIDFGDCFEVAMTREKFPEKIPFRLTRMLIKAMEVTGIEGTYRRTCESVMLVLRRNKDSLMAVLEAFVYDPLLNWRLLDVDKKGNDAVAGAGAPGGRGGSGMQDSLSNSVEDSLPMAKSKPYDPTLQQGGLHNNVADETNSKASQVIKRVKCKLTGTDFQTEKSVNEQSQVELLIQQATNNENLCQCYIGWCPFW.

HEAT repeat units lie at residues 172–209 (QHIL…VTAQ), 746–785 (SYMN…VNGG), 791–829 (LWAD…ATGR), 835–873 (HKYP…MDPY), 962–999 (PYLA…FVKL), 1043–1080 (DYLA…FGST), 1083–1122 (YYLP…QLDF), and 1124–1160 (DFSS…QLGK). The FAT domain occupies 1349 to 1903 (LLGTRAMACR…VYPLTVASKS (555 aa)). TPR repeat units follow at residues 1407–1440 (ANEL…DSSD) and 1718–1751 (MATW…DPNW). The stretch at 1854–1891 (NTWLQVIPQLIARIDTHRQLVGQLIHQLLMDIGKNHPQ) is one HEAT 9 repeat. The PI3K/PI4K catalytic domain occupies 2077–2389 (IKTNLQVITS…SLSNSVEDSL (313 aa)). Residues 2083–2089 (VITSKQR) form a G-loop region. Residues 2256-2264 (GLGDRHPSN) are catalytic loop. An activation loop region spans residues 2276–2301 (HIDFGDCFEVAMTREKFPEKIPFRLT). Residues 2364-2389 (AGAGAPGGRGGSGMQDSLSNSVEDSL) form a disordered region. Residues 2367 to 2376 (GAPGGRGGSG) show a composition bias toward gly residues. Residues 2377–2386 (MQDSLSNSVE) show a composition bias toward polar residues. The 33-residue stretch at 2438-2470 (KSVNEQSQVELLIQQATNNENLCQCYIGWCPFW) folds into the FATC domain.

This sequence belongs to the PI3/PI4-kinase family. May be part of a minimal complex, TORC1, consisting of mTor, raptor and lst8. May be part of a minimal complex, TORC2, consisting of mTor, rictor and lst8. Self-associates; assembles into homomultimeric complexes. Component of a multiprotein complex.

It carries out the reaction L-seryl-[protein] + ATP = O-phospho-L-seryl-[protein] + ADP + H(+). The enzyme catalyses L-threonyl-[protein] + ATP = O-phospho-L-threonyl-[protein] + ADP + H(+). Its function is as follows. Promotes cell and tissue growth, maintains tissue homeostatis and controls responses to environmental stress and aging. Regulates growth during animal development by coupling growth factor signaling to nutrient availability. Central regulators of autophagy. May be involved in atg1 phosphorylation. May also be involved, directly or indirectly, in the control of neuronal function. Phosphorylates S6K/p70S6K, in vitro. May regulate the activity of S6K. Overexpression inhibits growth and reduces cell size. Affects the timing of neuronal cell differentiation. Hyperactivation of the signaling leads to accelerated differentiation, whereas inhibition of the signaling retards differentiation. Thus, in addition to controlling growth of the cell in which it resides, it can also influence growth of distant cells and organs during development via a humoral mechanism. As part of the TORC1 complex regulates energy homeostasis and promotes certain aspects of larval growth by negatively regulating REPTOR. REPTOR functions downstream of TORC1 to regulate the expression of stress response genes in response to TORC1 inhibition resulting from nutrient deprivation. When TORC1 activity is high it phosphorylates REPTOR which inhibits its recruitment into the nucleus and antagonizes their function. This function is essential under normal feeding conditions to promote TORC1-dependent growth during larval development and, in adults and larvae to prevent the REPTOR-dependent expression of nutrient stress response genes. In short, during development, it primarily controls growth, whereas in the adult, where there is relatively little growth, it controls aging and other aspects of nutrient-related physiology. Rag GTPases act as activators of TORC1 in response to amino acid signals. The sequence is that of Serine/threonine-protein kinase mTor from Drosophila melanogaster (Fruit fly).